A 504-amino-acid chain; its full sequence is GTPase Der (504 aa).

One can recognise an EngA-type G 1 domain in the interval 4 to 168; that stretch reads PVVALVGRPN…QVLAPFAEKM (165 aa). GTP-binding positions include 10 to 17, 57 to 61, and 120 to 123; these read GRPNVGKS, DTGGI, and NKTD. The span at 168–179 shows a compositional bias: basic and acidic residues; it reads MENADENDRTSE. The disordered stretch occupies residues 168-191; it reads MENADENDRTSEEEQDEWEQEFDF. The span at 180-191 shows a compositional bias: acidic residues; it reads EEQDEWEQEFDF. The 174-residue stretch at 216–389 folds into the EngA-type G 2 domain; that stretch reads IKIAIVGRPN…SIKEAYACAT (174 aa). GTP contacts are provided by residues 222–229, 269–273, and 334–337; these read GRPNVGKS, DTAGV, and NKWD. The region spanning 390–474 is the KH-like domain; that stretch reads QKMTTSLLTR…PIRLLFQEGS (85 aa).

Belongs to the TRAFAC class TrmE-Era-EngA-EngB-Septin-like GTPase superfamily. EngA (Der) GTPase family. Associates with the 50S ribosomal subunit.

Its function is as follows. GTPase that plays an essential role in the late steps of ribosome biogenesis. The protein is GTPase Der of Haemophilus influenzae (strain ATCC 51907 / DSM 11121 / KW20 / Rd).